We begin with the raw amino-acid sequence, 758 residues long: Probable ubiquitin carboxyl-terminal hydrolase creB (758 aa).

The tract at residues 1 to 27 (MGSFLRSFRRDVGSSTPSVGATPAKKE) is disordered. A USP domain is found at 57 to 468 (FGMENYGNTC…CAYVLFYQET (412 aa)). Cys-66 acts as the Nucleophile in catalysis. Disordered regions lie at residues 116 to 148 (AEAQAEKQRLANAQRPGAPPAQPPKPEDKDSSE) and 243 to 268 (QPIPSLPPADTTDSSRQSISSGSKTP). Residues 253–268 (TTDSSRQSISSGSKTP) show a composition bias toward polar residues. The Proton acceptor role is filled by His-419. The segment at 514-744 (IPVQDEPQRH…KGDRAGHGKW (231 aa)) is disordered. Residues 554–563 (ATPPPVPPIP) are compositionally biased toward pro residues. Residues 573 to 631 (KKSDIQSKKERAKEEKERKAAEKEMEKQRRKEQEARVKENQRREEAELKAALEASKASK) are a coiled coil. Composition is skewed to basic and acidic residues over residues 573–650 (KKSD…DPKR) and 729–740 (DALKSPKGDRAG).

The protein belongs to the peptidase C19 family. In terms of assembly, interacts with creA, creC and qutD.

The enzyme catalyses Thiol-dependent hydrolysis of ester, thioester, amide, peptide and isopeptide bonds formed by the C-terminal Gly of ubiquitin (a 76-residue protein attached to proteins as an intracellular targeting signal).. Its function is as follows. Ubiquitin thioesterase component of the regulatory network controlling carbon source utilization through ubiquitination and deubiquitination involving creA, creB, creC, creD and acrB. Deubiquitinates the creA catabolic repressor and the quinate permease qutD. Also plays a role in response to carbon starvation and the control of extracellular proteases activity. This Aspergillus niger (strain ATCC MYA-4892 / CBS 513.88 / FGSC A1513) protein is Probable ubiquitin carboxyl-terminal hydrolase creB (creB).